A 114-amino-acid chain; its full sequence is ATP synthase subunit beta, mitochondrial (114 aa).

Residue Gly-44 to Thr-51 coordinates ATP.

This sequence belongs to the ATPase alpha/beta chains family. F-type ATPases have 2 components, CF(1) - the catalytic core - and CF(0) - the membrane proton channel. CF(1) has five subunits: alpha(3), beta(3), gamma(1), delta(1), epsilon(1). CF(0) has three main subunits: a, b and c.

It localises to the mitochondrion. Its subcellular location is the mitochondrion inner membrane. It carries out the reaction ATP + H2O + 4 H(+)(in) = ADP + phosphate + 5 H(+)(out). Functionally, mitochondrial membrane ATP synthase (F(1)F(0) ATP synthase or Complex V) produces ATP from ADP in the presence of a proton gradient across the membrane which is generated by electron transport complexes of the respiratory chain. F-type ATPases consist of two structural domains, F(1) - containing the extramembraneous catalytic core, and F(0) - containing the membrane proton channel, linked together by a central stalk and a peripheral stalk. During catalysis, ATP synthesis in the catalytic domain of F(1) is coupled via a rotary mechanism of the central stalk subunits to proton translocation. Subunits alpha and beta form the catalytic core in F(1). Rotation of the central stalk against the surrounding alpha(3)beta(3) subunits leads to hydrolysis of ATP in three separate catalytic sites on the beta subunits. This Penicillium glabrum (Penicillium frequentans) protein is ATP synthase subunit beta, mitochondrial (atp2).